The primary structure comprises 348 residues: Ferredoxin--NADP reductase (348 aa).

Threonine 25, glutamate 44, glutamine 52, tyrosine 57, valine 97, phenylalanine 132, aspartate 298, and serine 339 together coordinate FAD.

It belongs to the ferredoxin--NADP reductase type 2 family. As to quaternary structure, homodimer. The cofactor is FAD.

The catalysed reaction is 2 reduced [2Fe-2S]-[ferredoxin] + NADP(+) + H(+) = 2 oxidized [2Fe-2S]-[ferredoxin] + NADPH. The protein is Ferredoxin--NADP reductase of Chlorobium phaeobacteroides (strain BS1).